A 226-amino-acid polypeptide reads, in one-letter code: RNA pyrophosphohydrolase (226 aa).

A Nudix hydrolase domain is found at 6-149 (GFRPNVGIIL…KRGVYEMALT (144 aa)). Positions 38 to 59 (GGIDRGETPEQAMFRELHEEVG) match the Nudix box motif. The disordered stretch occupies residues 197-226 (MELPPGASFDPDPRTGDGDPGMPGIHKPAG).

This sequence belongs to the Nudix hydrolase family. RppH subfamily. The cofactor is a divalent metal cation.

In terms of biological role, accelerates the degradation of transcripts by removing pyrophosphate from the 5'-end of triphosphorylated RNA, leading to a more labile monophosphorylated state that can stimulate subsequent ribonuclease cleavage. The sequence is that of RNA pyrophosphohydrolase from Paracidovorax citrulli (strain AAC00-1) (Acidovorax citrulli).